An 885-amino-acid polypeptide reads, in one-letter code: Leucine--tRNA ligase (885 aa).

The 'HIGH' region signature appears at 48–58 (PYPSGKLHMGH). Positions 639 to 643 (TMSKS) match the 'KMSKS' region motif. Residue Lys642 coordinates ATP.

The protein belongs to the class-I aminoacyl-tRNA synthetase family.

It is found in the cytoplasm. It carries out the reaction tRNA(Leu) + L-leucine + ATP = L-leucyl-tRNA(Leu) + AMP + diphosphate. This Bordetella parapertussis (strain 12822 / ATCC BAA-587 / NCTC 13253) protein is Leucine--tRNA ligase.